Consider the following 560-residue polypeptide: MNIEQENITNTTLTNTNNVNDKPKPKRKKTSRACNHCHKAHMTCDPGRPCQRCIQRGLGSTCEDAPRKRKKYLEDVPNSSLMSSHSINSSDHLDSNGVTPMQSTLSLPMPPVQESPFSTSAPTQSQVPAYTPSTVPQRQPSYSPQVASNYSPNHKTYSATLFQHSATSPELMQTVPEYFPELHNQHYQPSANPNQKRRTNFLSTAADLEYSTLSNILQENFGHHTTSNEGTPNSHNFSPALSPHNMPTTDTNAPPPSIQLASNDQRQVTSFNNHTKHSTPSPLNTSQTKLYEDARYPKCDETINQYFLGDTESGKMVVFPDVLTAIENMKNNDPAVYVERNSKSTLSFAMSISHESNSNNGKDGQLFKEPEEIYEKVKKPFSYTPGYHSLIAYLRKRFTKPMLVKMAESMATYRPSFIACTNSLKEHDLIFMEQCFQRTLLTYDNYIKISGTPTIVWRRTGEVAYVGNEFCVLTGWPKEELIGKDKRKFIVELLDDKSVLQYFQVFSRIAFGDFLGATMTECTLLTPNPNVKIRTGCMWTLKRDVFGIPMMIVGNFLPIL.

The tract at residues 1-32 is disordered; the sequence is MNIEQENITNTTLTNTNNVNDKPKPKRKKTSR. Over residues 7 to 20 the composition is skewed to low complexity; the sequence is NITNTTLTNTNNVN. The zn(2)-C6 fungal-type DNA-binding region spans 34–62; the sequence is CNHCHKAHMTCDPGRPCQRCIQRGLGSTC. 2 disordered regions span residues 75-149 and 222-260; these read DVPN…VASN and GHHTTSNEGTPNSHNFSPALSPHNMPTTDTNAPPPSIQL. Residues 78–90 show a composition bias toward low complexity; it reads NSSLMSSHSINSS. 3 stretches are compositionally biased toward polar residues: residues 96 to 106, 115 to 149, and 222 to 252; these read NGVTPMQSTLS, SPFSTSAPTQSQVPAYTPSTVPQRQPSYSPQVASN, and GHHTTSNEGTPNSHNFSPALSPHNMPTTDTN. The 75-residue stretch at 439–513 folds into the PAS domain; the sequence is TLLTYDNYIK…QVFSRIAFGD (75 aa).

The protein belongs to the ERT1/acuK family.

It is found in the nucleus. Functionally, transcription factor which regulates nonfermentable carbon utilization. Activator of gluconeogenetic genes. This is Transcription activator of gluconeogenesis ERT1 (ERT1) from Candida dubliniensis (strain CD36 / ATCC MYA-646 / CBS 7987 / NCPF 3949 / NRRL Y-17841) (Yeast).